The chain runs to 626 residues: Colicin-Ib (626 aa).

Positions 276–286 (QQLTQQKNTPD) are enriched in polar residues. Residues 276-308 (QQLTQQKNTPDGKTIVSPEKFPGRSSTNHSIVV) are disordered. Residues 588-612 (FSVMLGTPVGILGFAIIMAAVSALV) traverse the membrane as a helical segment.

The protein belongs to the channel forming colicin family.

The protein localises to the host membrane. This colicin is a channel-forming colicin. This class of transmembrane toxins depolarize the cytoplasmic membrane, leading to dissipation of cellular energy. In terms of biological role, colicins are polypeptide toxins produced by and active against E.coli and closely related bacteria. The protein is Colicin-Ib (cib) of Escherichia coli.